A 348-amino-acid polypeptide reads, in one-letter code: Phenylalanine--tRNA ligase alpha subunit (348 aa).

E259 is a binding site for Mg(2+).

It belongs to the class-II aminoacyl-tRNA synthetase family. Phe-tRNA synthetase alpha subunit type 1 subfamily. Tetramer of two alpha and two beta subunits. It depends on Mg(2+) as a cofactor.

Its subcellular location is the cytoplasm. It carries out the reaction tRNA(Phe) + L-phenylalanine + ATP = L-phenylalanyl-tRNA(Phe) + AMP + diphosphate + H(+). The sequence is that of Phenylalanine--tRNA ligase alpha subunit from Lacticaseibacillus casei (strain BL23) (Lactobacillus casei).